We begin with the raw amino-acid sequence, 415 residues long: Serine hydroxymethyltransferase (415 aa).

Residues L117 and 121–123 (GHL) contribute to the (6S)-5,6,7,8-tetrahydrofolate site. K226 is subject to N6-(pyridoxal phosphate)lysine. Position 241 (E241) interacts with (6S)-5,6,7,8-tetrahydrofolate.

Belongs to the SHMT family. As to quaternary structure, homodimer. Pyridoxal 5'-phosphate serves as cofactor.

The protein resides in the cytoplasm. The catalysed reaction is (6R)-5,10-methylene-5,6,7,8-tetrahydrofolate + glycine + H2O = (6S)-5,6,7,8-tetrahydrofolate + L-serine. Its pathway is one-carbon metabolism; tetrahydrofolate interconversion. The protein operates within amino-acid biosynthesis; glycine biosynthesis; glycine from L-serine: step 1/1. Its function is as follows. Catalyzes the reversible interconversion of serine and glycine with tetrahydrofolate (THF) serving as the one-carbon carrier. This reaction serves as the major source of one-carbon groups required for the biosynthesis of purines, thymidylate, methionine, and other important biomolecules. Also exhibits THF-independent aldolase activity toward beta-hydroxyamino acids, producing glycine and aldehydes, via a retro-aldol mechanism. This is Serine hydroxymethyltransferase from Bacillus subtilis (strain 168).